The chain runs to 420 residues: Serine/threonine transporter SstT (420 aa).

9 consecutive transmembrane segments (helical) span residues 14–34 (IMIGIVIGTTLGFLVPEWTFI), 40–60 (LFVGALKAIAPILVFVLIIAS), 71–91 (YVGSILVVYLLATFLAAVVAV), 172–192 (ITTVVQMIIGIAPIGILGLVF), 210–230 (LLLLIGTMAVVALVVYPAIVF), 283–303 (IPLGATINMGGAAITITIMTL), 309–329 (LGMSVPIYLALLLSIIAAVSA), 332–352 (ASGIAGGSLLLIPLACSLFGI), and 356–376 (IAMQVVGVGFIVGVVQDSIET).

This sequence belongs to the dicarboxylate/amino acid:cation symporter (DAACS) (TC 2.A.23) family.

It is found in the cell membrane. It carries out the reaction L-serine(in) + Na(+)(in) = L-serine(out) + Na(+)(out). The enzyme catalyses L-threonine(in) + Na(+)(in) = L-threonine(out) + Na(+)(out). In terms of biological role, involved in the import of serine and threonine into the cell, with the concomitant import of sodium (symport system). The sequence is that of Serine/threonine transporter SstT from Enterococcus faecalis (strain ATCC 700802 / V583).